The following is a 519-amino-acid chain: Maltose/maltodextrin transport system permease protein MalF (519 aa).

Residues 1 to 18 lie on the Cytoplasmic side of the membrane; the sequence is MRKNPMDVIKKKHWWQSD. Residues 19-41 traverse the membrane as a helical segment; it reads ALKWSVLGLLGLLVGYLVVLMYA. Over 42-44 the chain is Periplasmic; it reads QGE. A helical membrane pass occupies residues 45-62; it reads YLFAITTLILSSAGLYIF. Residues 63–74 lie on the Cytoplasmic side of the membrane; the sequence is ANRKAYAWRYVY. A helical membrane pass occupies residues 75-97; that stretch reads PGMAGMGLFVLFPLVCTIAIAFT. Topologically, residues 98–288 are periplasmic; that stretch reads NYSSTNQLTF…QKPFLAIFVW (191 aa). Positions 286 to 510 constitute an ABC transmembrane type-1 domain; that stretch reads FVWTVVFSLI…LLVGALAIVN (225 aa). A helical transmembrane segment spans residues 289-311; sequence TVVFSLITVFLTVAVGMVLACLV. Residues 312 to 323 lie on the Cytoplasmic side of the membrane; that stretch reads QWEALRGKAVYR. Residues 324-346 form a helical membrane-spanning segment; sequence VLLILPYAVPSFISILIFKGLFN. The Periplasmic segment spans residues 347-374; it reads QSFGEINMMLSALFGVKPAWFSDPTTAR. Residues 375-397 traverse the membrane as a helical segment; sequence TMLIIVNTWLGYPYMMILCMGLL. Topologically, residues 398–417 are cytoplasmic; the sequence is KAIPDDLYEASAMDGAGPFQ. The chain crosses the membrane as a helical span at residues 418 to 440; that stretch reads NFFKITLPLLIKPLTPLMIASFA. The Periplasmic segment spans residues 441–488; it reads FNFNNFVLIQLLTNGGPDRLGTTTPAGYTDLLVNYTYRIAFEGGGGQD. The chain crosses the membrane as a helical span at residues 489–511; it reads FGLAAAIATLIFLLVGALAIVNL. Residues 512–519 are Cytoplasmic-facing; that stretch reads KATRMKFD.

Belongs to the binding-protein-dependent transport system permease family. MalFG subfamily. The complex is composed of two ATP-binding proteins (MalK), two transmembrane proteins (MalG and MalF) and a solute-binding protein (MalE).

It localises to the cell inner membrane. Functionally, part of the ABC transporter complex MalEFGK involved in maltose/maltodextrin import. Probably responsible for the translocation of the substrate across the membrane. The chain is Maltose/maltodextrin transport system permease protein MalF (malF) from Escherichia coli O6:H1 (strain CFT073 / ATCC 700928 / UPEC).